Here is a 447-residue protein sequence, read N- to C-terminus: Alliin lyase (447 aa).

Positions 1 to 2 are excised as a propeptide; the sequence is QA. In terms of domain architecture, EGF-like; atypical spans 15 to 61; it reads EAVANINCSGHGRAFLDGILSDGSPKCECNTCYTGADCSQKITGCSA. N21 is a glycosylation site (N-linked (GlcNAc...) asparagine). Disulfide bonds link C22/C41, C43/C52, and C46/C59. 94 to 102 lines the chloride pocket; it reads YFFNPVSNF. N-linked (GlcNAc...) asparagine glycans are attached at residues N148 and N193. At K253 the chain carries N6-(pyridoxal phosphate)lysine. An N-linked (GlcNAc...) asparagine glycan is attached at N330. C370 and C378 form a disulfide bridge.

The protein belongs to the alliinase family. In terms of assembly, homodimer. Pyridoxal 5'-phosphate is required as a cofactor.

The protein localises to the vacuole. The catalysed reaction is an S-alkyl-L-cysteine S-oxide = an S-alkyl sulfenate + 2-aminoprop-2-enoate. In Allium cepa var. aggregatum (Shallot), this protein is Alliin lyase.